A 469-amino-acid chain; its full sequence is Argininosuccinate lyase (469 aa).

The protein belongs to the lyase 1 family. Argininosuccinate lyase subfamily.

Its subcellular location is the cytoplasm. It carries out the reaction 2-(N(omega)-L-arginino)succinate = fumarate + L-arginine. The protein operates within amino-acid biosynthesis; L-arginine biosynthesis; L-arginine from L-ornithine and carbamoyl phosphate: step 3/3. This chain is Argininosuccinate lyase, found in Burkholderia multivorans (strain ATCC 17616 / 249).